The chain runs to 116 residues: UPF0298 protein EF_2453 (116 aa).

This sequence belongs to the UPF0298 family.

It is found in the cytoplasm. The polypeptide is UPF0298 protein EF_2453 (Enterococcus faecalis (strain ATCC 700802 / V583)).